The sequence spans 859 residues: Leucine--tRNA ligase (859 aa).

A 'HIGH' region motif is present at residues 42–52 (PYPSGRLHMGH). The 'KMSKS' region motif lies at 618–622 (KMSKS). K621 contacts ATP.

The protein belongs to the class-I aminoacyl-tRNA synthetase family.

The protein localises to the cytoplasm. It carries out the reaction tRNA(Leu) + L-leucine + ATP = L-leucyl-tRNA(Leu) + AMP + diphosphate. This is Leucine--tRNA ligase from Shewanella sp. (strain ANA-3).